Here is a 245-residue protein sequence, read N- to C-terminus: 8-amino-3,8-dideoxy-manno-octulosonate cytidylyltransferase (245 aa).

It belongs to the KdsB family.

It localises to the cytoplasm. The catalysed reaction is 8-amino-3,8-dideoxy-alpha-D-manno-octulosonate + CTP = CMP-8-amino-3,8-dideoxy-alpha-D-manno-oct-2-ulosonate + diphosphate. Its pathway is bacterial outer membrane biogenesis; lipopolysaccharide biosynthesis. In terms of biological role, activates KDO8N (a required 8-carbon sugar) for incorporation into bacterial lipopolysaccharide in the Shewanella genus. In Shewanella frigidimarina (strain NCIMB 400), this protein is 8-amino-3,8-dideoxy-manno-octulosonate cytidylyltransferase.